The chain runs to 772 residues: RNA exonuclease 5 (772 aa).

The segment covering 1–10 (MEPEREGTER) has biased composition (basic and acidic residues). The disordered stretch occupies residues 1 to 26 (MEPEREGTERHPRKVRKRRQAPNKLV). The span at 11 to 21 (HPRKVRKRRQA) shows a compositional bias: basic residues. Residues 228–376 (LFGLDCEMCL…EDARIILELA (149 aa)) enclose the Exonuclease domain. RRM domains follow at residues 505–579 (STVY…RPVT) and 600–679 (GSIY…RHLH).

The sequence is that of RNA exonuclease 5 (REXO5) from Macaca fascicularis (Crab-eating macaque).